A 347-amino-acid chain; its full sequence is FMRFamide-related peptides (347 aa).

Residues 1–22 (MGIALMFLLALYQMQSAIHSEI) form the signal peptide. The propeptide occupies 23–102 (IDTPNYAGNS…RYKYDPELEA (80 aa)). The residue at position 114 (Phe114) is a Phenylalanine amide. Position 146 is a tyrosine amide (Tyr146). Residues Phe157, Phe168, Phe179, Phe190, Phe201, Phe212, Phe223, and Phe232 each carry the phenylalanine amide modification. The propeptide occupies 235-240 (SPHEEL). 2 positions are modified to phenylalanine amide: Phe250 and Phe259. Ser270 is modified (serine amide). Residue Phe280 is modified to Phenylalanine amide. The propeptide occupies 283-347 (SLKPAAPESK…SVEQDQFFGQ (65 aa)). Positions 283 to 347 (SLKPAAPESK…SVEQDQFFGQ (65 aa)) are disordered. Residues 305–320 (SPVDKAMTELFKKQEL) show a composition bias toward basic and acidic residues. Residues 321–347 (QDQQVKNGAQATTTQDGSVEQDQFFGQ) are compositionally biased toward polar residues.

Belongs to the FARP (FMRFamide related peptide) family. Post-translationally, this precursor includes 13 peptides that have FMRF or related sequences at their C-termini, and other putative neuropeptides.

It localises to the secreted. In terms of biological role, in insects, FMRFamide and related peptides have modulatory actions at skeletal neuromuscular junctions, and peptides that are immunologically related to FMRFamide are released into the circulation from neurohemal organs. In Drosophila melanogaster (Fruit fly), this protein is FMRFamide-related peptides.